The primary structure comprises 573 residues: 60 kDa heat shock protein, mitochondrial (573 aa).

The N-terminal 26 residues, 1–26, are a transit peptide targeting the mitochondrion; the sequence is MLRLPTVFRQMRPVSRVLAPHLTRAY. An N6-succinyllysine modification is found at K31. Phosphoserine is present on residues S67 and S70. K75 is a binding site for ATP. Position 75 is an N6-acetyllysine (K75). Position 82 is an N6-acetyllysine; alternate (K82). K82 is modified (N6-succinyllysine; alternate). An N6-acetyllysine modification is found at K87. Y90 is modified (phosphotyrosine). At K91 the chain carries N6-acetyllysine. 111–115 serves as a coordination point for ATP; that stretch reads DGTTT. K125 carries the N6-acetyllysine; alternate modification. N6-succinyllysine; alternate is present on K125. Residue K130 is modified to N6-acetyllysine. An N6-acetyllysine; alternate modification is found at K133. K133 bears the N6-succinyllysine; alternate mark. The residue at position 133 (K133) is an N6-malonyllysine; alternate. K156 carries the post-translational modification N6-acetyllysine. Residues K191, K202, K205, K218, and K236 each carry the N6-acetyllysine; alternate modification. N6-succinyllysine; alternate occurs at positions 191, 202, 205, 218, and 236. K249 is modified (N6-acetyllysine). The residue at position 250 (K250) is an N6-acetyllysine; alternate. K250 carries the N6-succinyllysine; alternate modification. Residues K269 and K292 each carry the N6-acetyllysine modification. K301 carries the post-translational modification N6-succinyllysine. K314 is modified (N6-acetyllysine). K352 carries the N6-acetyllysine; alternate modification. At K352 the chain carries N6-succinyllysine; alternate. An N6-acetyllysine mark is found at K359 and K389. The residue at position 396 (K396) is an N6-acetyllysine; alternate. K396 is subject to N6-succinyllysine; alternate. S410 is subject to Phosphoserine. Residue G440 coordinates ATP. The residue at position 469 (K469) is an N6-acetyllysine. K481 bears the N6-acetyllysine; alternate mark. K481 carries the post-translational modification N6-succinyllysine; alternate. A Phosphoserine modification is found at S488. D520 provides a ligand contact to ATP. K551 participates in a covalent cross-link: Glycyl lysine isopeptide (Lys-Gly) (interchain with G-Cter in SUMO2).

It belongs to the chaperonin (HSP60) family. In terms of assembly, homoheptamer arranged in a ring structure. The functional units of these chaperonins consist of heptameric rings of the large subunit Hsp60, which function as a back-to-back double ring. Interacts with 2 heptameric Hsp10 rings to form the symmetrical football complex. Interacts with HRAS. Interacts with ATAD3A. Interacts with ETFBKMT and EEF1AKMT3. Interacts with MFHAS1. As to quaternary structure, (Microbial infection) Interacts with hepatitis B virus/HBV protein X. (Microbial infection) Interacts with HTLV-1 protein p40tax.

Its subcellular location is the mitochondrion matrix. The catalysed reaction is ATP + H2O + a folded polypeptide = ADP + phosphate + an unfolded polypeptide.. Functionally, chaperonin implicated in mitochondrial protein import and macromolecular assembly. Together with Hsp10, facilitates the correct folding of imported proteins. May also prevent misfolding and promote the refolding and proper assembly of unfolded polypeptides generated under stress conditions in the mitochondrial matrix. The functional units of these chaperonins consist of heptameric rings of the large subunit Hsp60, which function as a back-to-back double ring. In a cyclic reaction, Hsp60 ring complexes bind one unfolded substrate protein per ring, followed by the binding of ATP and association with 2 heptameric rings of the co-chaperonin Hsp10. This leads to sequestration of the substrate protein in the inner cavity of Hsp60 where, for a certain period of time, it can fold undisturbed by other cell components. Synchronous hydrolysis of ATP in all Hsp60 subunits results in the dissociation of the chaperonin rings and the release of ADP and the folded substrate protein. The chain is 60 kDa heat shock protein, mitochondrial (HSPD1) from Homo sapiens (Human).